The following is a 262-amino-acid chain: Acyl-[acyl-carrier-protein]--UDP-N-acetylglucosamine O-acyltransferase (262 aa).

The protein belongs to the transferase hexapeptide repeat family. LpxA subfamily. Homotrimer.

The protein localises to the cytoplasm. The catalysed reaction is a (3R)-hydroxyacyl-[ACP] + UDP-N-acetyl-alpha-D-glucosamine = a UDP-3-O-[(3R)-3-hydroxyacyl]-N-acetyl-alpha-D-glucosamine + holo-[ACP]. Its pathway is glycolipid biosynthesis; lipid IV(A) biosynthesis; lipid IV(A) from (3R)-3-hydroxytetradecanoyl-[acyl-carrier-protein] and UDP-N-acetyl-alpha-D-glucosamine: step 1/6. Functionally, involved in the biosynthesis of lipid A, a phosphorylated glycolipid that anchors the lipopolysaccharide to the outer membrane of the cell. The chain is Acyl-[acyl-carrier-protein]--UDP-N-acetylglucosamine O-acyltransferase from Mannheimia succiniciproducens (strain KCTC 0769BP / MBEL55E).